We begin with the raw amino-acid sequence, 357 residues long: Dihydroorotate dehydrogenase (quinone) (357 aa).

Residues 61 to 65 (AGFDK) and threonine 85 contribute to the FMN site. Lysine 65 provides a ligand contact to substrate. Residue 110–114 (NRFGF) coordinates substrate. 2 residues coordinate FMN: asparagine 141 and asparagine 172. Residue asparagine 172 coordinates substrate. Serine 175 functions as the Nucleophile in the catalytic mechanism. Asparagine 177 is a binding site for substrate. FMN-binding residues include lysine 217 and glycine 245. 246 to 247 (NT) lines the substrate pocket. FMN is bound by residues glycine 268, glycine 297, and 318–319 (YS).

The protein belongs to the dihydroorotate dehydrogenase family. Type 2 subfamily. As to quaternary structure, monomer. FMN is required as a cofactor.

The protein localises to the cell membrane. It carries out the reaction (S)-dihydroorotate + a quinone = orotate + a quinol. Its pathway is pyrimidine metabolism; UMP biosynthesis via de novo pathway; orotate from (S)-dihydroorotate (quinone route): step 1/1. Its function is as follows. Catalyzes the conversion of dihydroorotate to orotate with quinone as electron acceptor. In Xanthobacter autotrophicus (strain ATCC BAA-1158 / Py2), this protein is Dihydroorotate dehydrogenase (quinone).